The chain runs to 332 residues: Cinnamoyl-CoA reductase 2 (332 aa).

Residues 12–18 (GAGGYIA), R37, K43, 63–64 (DL), 83–85 (TAS), Y156, K160, 183–186 (PVLV), and S198 contribute to the NADP(+) site. Cysteines 149 and 157 form a disulfide. The active-site Proton donor is the K160.

The protein belongs to the NAD(P)-dependent epimerase/dehydratase family. Dihydroflavonol-4-reductase subfamily. In terms of tissue distribution, expressed at low levels in leaves, stems and flowers.

It carries out the reaction (E)-cinnamaldehyde + NADP(+) + CoA = (E)-cinnamoyl-CoA + NADPH + H(+). It functions in the pathway aromatic compound metabolism; phenylpropanoid biosynthesis. In terms of biological role, cinnamoyl-CoA reductase probably involved in the formation of phenolic compounds associated with the hypersensitive response. Seems not to be involved in lignin biosynthesis. The chain is Cinnamoyl-CoA reductase 2 (CCR2) from Arabidopsis thaliana (Mouse-ear cress).